An 87-amino-acid polypeptide reads, in one-letter code: Small ribosomal subunit protein bS20 (87 aa).

This sequence belongs to the bacterial ribosomal protein bS20 family.

In terms of biological role, binds directly to 16S ribosomal RNA. The polypeptide is Small ribosomal subunit protein bS20 (Parvibaculum lavamentivorans (strain DS-1 / DSM 13023 / NCIMB 13966)).